The following is a 229-amino-acid chain: Protein OPG034 (229 aa).

This sequence belongs to the orthopoxvirus OPG034 family.

The sequence is that of Protein OPG034 (OPG034) from Vaccinia virus (strain Western Reserve) (VACV).